The chain runs to 96 residues: Class I hydrophobin 3 (96 aa).

A signal peptide spans 1 to 18; sequence MQFAKIASVLAMAAAAVA. 4 cysteine pairs are disulfide-bonded: C43/C72, C51/C66, C52/C57, and C73/C92.

It belongs to the fungal hydrophobin family.

It is found in the secreted. The protein localises to the cell wall. Aerial growth, conidiation, and dispersal of filamentous fungi in the environment rely upon a capability of their secreting small amphipathic proteins called hydrophobins (HPBs) with low sequence identity. Class I can self-assemble into an outermost layer of rodlet bundles on aerial cell surfaces, conferring cellular hydrophobicity that supports fungal growth, development and dispersal; whereas Class II form highly ordered films at water-air interfaces through intermolecular interactions but contribute nothing to the rodlet structure. Does not seem to be important for the ability to cause seedling disease. In Gibberella moniliformis (Maize ear and stalk rot fungus), this protein is Class I hydrophobin 3.